A 352-amino-acid chain; its full sequence is Molybdenum import ATP-binding protein ModC (352 aa).

In terms of domain architecture, ABC transporter spans 1–229 (MLELNFSQTL…SVMNPWLPKE (229 aa)). 31 to 38 (GVSGAGKT) is an ATP binding site. A Mop domain is found at 289–352 (QTSIRNVLRA…AQIKSVSITA (64 aa)).

It belongs to the ABC transporter superfamily. Molybdate importer (TC 3.A.1.8) family. In terms of assembly, the complex is composed of two ATP-binding proteins (ModC), two transmembrane proteins (ModB) and a solute-binding protein (ModA).

The protein resides in the cell inner membrane. The catalysed reaction is molybdate(out) + ATP + H2O = molybdate(in) + ADP + phosphate + H(+). Its function is as follows. Part of the ABC transporter complex ModABC involved in molybdenum import. Responsible for energy coupling to the transport system. The sequence is that of Molybdenum import ATP-binding protein ModC from Escherichia coli O6:K15:H31 (strain 536 / UPEC).